The chain runs to 250 residues: Anamorsin homolog 1 (250 aa).

The N-terminal SAM-like domain stretch occupies residues 1–104; it reads MNLKITINQQ…KKLNIPQQEF (104 aa). The tract at residues 104 to 149 is linker; that stretch reads FNNCYGKYDYIEQKFQNQINFFKQVDINGKQEIIDENELLDDGVQV. Cys-155, Cys-162, Cys-165, and Cys-167 together coordinate [2Fe-2S] cluster. The segment at 155 to 167 is fe-S binding site A; it reads CASKPRACANCTC. Residues Cys-193, Cys-196, Cys-204, and Cys-207 each coordinate [4Fe-4S] cluster. 2 short sequence motifs (cx2C motif) span residues 193–196 and 204–207; these read CGSC and CANC. Positions 193–207 are fe-S binding site B; that stretch reads CGSCYLGDAFRCANC.

This sequence belongs to the anamorsin family. Monomer. The cofactor is [2Fe-2S] cluster. [4Fe-4S] cluster serves as cofactor.

It is found in the cytoplasm. It localises to the mitochondrion intermembrane space. Component of the cytosolic iron-sulfur (Fe-S) protein assembly (CIA) machinery. Required for the maturation of extramitochondrial Fe-S proteins. Part of an electron transfer chain functioning in an early step of cytosolic Fe-S biogenesis, facilitating the de novo assembly of a [4Fe-4S] cluster on the cytosolic Fe-S scaffold complex. Electrons are transferred from NADPH via a FAD- and FMN-containing diflavin oxidoreductase. Together with the diflavin oxidoreductase, also required for the assembly of the diferric tyrosyl radical cofactor of ribonucleotide reductase (RNR), probably by providing electrons for reduction during radical cofactor maturation in the catalytic small subunit. In Paramecium tetraurelia, this protein is Anamorsin homolog 1.